The chain runs to 204 residues: Transcriptional regulator GfcR (204 aa).

The protein belongs to the purine/pyrimidine phosphoribosyltransferase family. GfcR subfamily.

The protein is Transcriptional regulator GfcR of Methanoculleus marisnigri (strain ATCC 35101 / DSM 1498 / JR1).